A 450-amino-acid polypeptide reads, in one-letter code: Phosphoglucosamine mutase (450 aa).

The active-site Phosphoserine intermediate is the S103. Mg(2+) contacts are provided by S103, D243, D245, and D247. S103 carries the post-translational modification Phosphoserine.

Belongs to the phosphohexose mutase family. It depends on Mg(2+) as a cofactor. Activated by phosphorylation.

It catalyses the reaction alpha-D-glucosamine 1-phosphate = D-glucosamine 6-phosphate. In terms of biological role, catalyzes the conversion of glucosamine-6-phosphate to glucosamine-1-phosphate. The sequence is that of Phosphoglucosamine mutase from Lactobacillus delbrueckii subsp. bulgaricus (strain ATCC BAA-365 / Lb-18).